The chain runs to 100 residues: Aspartyl/glutamyl-tRNA(Asn/Gln) amidotransferase subunit C (100 aa).

The protein belongs to the GatC family. Heterotrimer of A, B and C subunits.

The catalysed reaction is L-glutamyl-tRNA(Gln) + L-glutamine + ATP + H2O = L-glutaminyl-tRNA(Gln) + L-glutamate + ADP + phosphate + H(+). It carries out the reaction L-aspartyl-tRNA(Asn) + L-glutamine + ATP + H2O = L-asparaginyl-tRNA(Asn) + L-glutamate + ADP + phosphate + 2 H(+). Allows the formation of correctly charged Asn-tRNA(Asn) or Gln-tRNA(Gln) through the transamidation of misacylated Asp-tRNA(Asn) or Glu-tRNA(Gln) in organisms which lack either or both of asparaginyl-tRNA or glutaminyl-tRNA synthetases. The reaction takes place in the presence of glutamine and ATP through an activated phospho-Asp-tRNA(Asn) or phospho-Glu-tRNA(Gln). The polypeptide is Aspartyl/glutamyl-tRNA(Asn/Gln) amidotransferase subunit C (Janthinobacterium sp. (strain Marseille) (Minibacterium massiliensis)).